The sequence spans 728 residues: 1,4-alpha-glucan branching enzyme GlgB (728 aa).

Asp-405 (nucleophile) is an active-site residue. The active-site Proton donor is the Glu-458.

Belongs to the glycosyl hydrolase 13 family. GlgB subfamily. In terms of assembly, monomer.

It carries out the reaction Transfers a segment of a (1-&gt;4)-alpha-D-glucan chain to a primary hydroxy group in a similar glucan chain.. It functions in the pathway glycan biosynthesis; glycogen biosynthesis. Its function is as follows. Catalyzes the formation of the alpha-1,6-glucosidic linkages in glycogen by scission of a 1,4-alpha-linked oligosaccharide from growing alpha-1,4-glucan chains and the subsequent attachment of the oligosaccharide to the alpha-1,6 position. This is 1,4-alpha-glucan branching enzyme GlgB from Escherichia coli O139:H28 (strain E24377A / ETEC).